The sequence spans 92 residues: YcgL domain-containing protein ASA_2166 (92 aa).

Residues methionine 1–lysine 85 form the YcgL domain.

This chain is YcgL domain-containing protein ASA_2166, found in Aeromonas salmonicida (strain A449).